Consider the following 222-residue polypeptide: Voltage-dependent calcium channel gamma-1 subunit (222 aa).

Topologically, residues 1–10 (MSQTKMLKVR) are cytoplasmic. The chain crosses the membrane as a helical span at residues 11–29 (VTLFCILAGIVLAMTAVVT). Over 30 to 108 (DHWAVLSPHM…TQKEYSISAA (79 aa)) the chain is Extracellular. N-linked (GlcNAc...) asparagine glycosylation is found at asparagine 43 and asparagine 79. Cysteine 57 and cysteine 80 are oxidised to a cystine. A helical transmembrane segment spans residues 109–129 (AIAIFSLGFIILGSLCVLLSL). The Cytoplasmic segment spans residues 130-134 (GKKRD). The chain crosses the membrane as a helical span at residues 135 to 155 (YLLRPASMFYAFAGLCILVSV). At 156 to 179 (EVMRQSVKRMIDSEDTVWIEYYYS) the chain is on the extracellular side. A helical transmembrane segment spans residues 180–204 (WSFACACAAFILLFLGGLALLLFSL). Residues 205-222 (PRMPRNPWESCMDAEPEH) lie on the Cytoplasmic side of the membrane.

Belongs to the PMP-22/EMP/MP20 family. CACNG subfamily. In terms of assembly, component of a calcium channel complex consisting of a pore-forming alpha subunit (CACNA1S) and the ancillary subunits CACNB1 or CACNB2, CACNG1 and CACNA2D1. The channel complex contains alpha, beta, gamma and delta subunits in a 1:1:1:1 ratio, i.e. it contains either CACNB1 or CACNB2. Post-translationally, N-glycosylated. In terms of tissue distribution, skeletal muscle.

It is found in the cell membrane. It localises to the sarcolemma. Regulatory subunit of the voltage-gated calcium channel that gives rise to L-type calcium currents in skeletal muscle. Regulates channel inactivation kinetics. This Homo sapiens (Human) protein is Voltage-dependent calcium channel gamma-1 subunit (CACNG1).